Consider the following 366-residue polypeptide: Spermidine/putrescine import ATP-binding protein PotA (366 aa).

The ABC transporter domain occupies 8–239 (IRFENVTKQF…PINKFVADFI (232 aa)). 41 to 48 (GPSGCGKT) lines the ATP pocket.

The protein belongs to the ABC transporter superfamily. Spermidine/putrescine importer (TC 3.A.1.11.1) family. As to quaternary structure, the complex is composed of two ATP-binding proteins (PotA), two transmembrane proteins (PotB and PotC) and a solute-binding protein (PotD).

The protein resides in the cell membrane. The catalysed reaction is ATP + H2O + polyamine-[polyamine-binding protein]Side 1 = ADP + phosphate + polyamineSide 2 + [polyamine-binding protein]Side 1.. Functionally, part of the ABC transporter complex PotABCD involved in spermidine/putrescine import. Responsible for energy coupling to the transport system. The polypeptide is Spermidine/putrescine import ATP-binding protein PotA (Listeria monocytogenes serotype 4b (strain F2365)).